We begin with the raw amino-acid sequence, 375 residues long: Holliday junction branch migration complex subunit RuvB (375 aa).

Residues 1 to 22 are compositionally biased toward polar residues; sequence MAIVSSKQSPQPDGSKKPSQAK. The interval 1–44 is disordered; that stretch reads MAIVSSKQSPQPDGSKKPSQAKSVKKSVEHSKPQQTDALLQPEA. Positions 13–218 are large ATPase domain (RuvB-L); that stretch reads DGSKKPSQAK…FGFVQRLRFY (206 aa). ATP-binding positions include L57, R58, G99, K102, T103, T104, 165 to 167, R208, Y218, and R255; that span reads EDF. T103 contacts Mg(2+). Positions 219–289 are small ATPAse domain (RuvB-S); that stretch reads EADELGQIVL…IAQEALELFN (71 aa). Residues 292 to 375 are head domain (RuvB-H); it reads PCGLDWTDRR…PPDEQMRLLS (84 aa). The DNA site is built by R347 and R352.

This sequence belongs to the RuvB family. In terms of assembly, homohexamer. Forms an RuvA(8)-RuvB(12)-Holliday junction (HJ) complex. HJ DNA is sandwiched between 2 RuvA tetramers; dsDNA enters through RuvA and exits via RuvB. An RuvB hexamer assembles on each DNA strand where it exits the tetramer. Each RuvB hexamer is contacted by two RuvA subunits (via domain III) on 2 adjacent RuvB subunits; this complex drives branch migration. In the full resolvosome a probable DNA-RuvA(4)-RuvB(12)-RuvC(2) complex forms which resolves the HJ.

The protein localises to the cytoplasm. The catalysed reaction is ATP + H2O = ADP + phosphate + H(+). In terms of biological role, the RuvA-RuvB-RuvC complex processes Holliday junction (HJ) DNA during genetic recombination and DNA repair, while the RuvA-RuvB complex plays an important role in the rescue of blocked DNA replication forks via replication fork reversal (RFR). RuvA specifically binds to HJ cruciform DNA, conferring on it an open structure. The RuvB hexamer acts as an ATP-dependent pump, pulling dsDNA into and through the RuvAB complex. RuvB forms 2 homohexamers on either side of HJ DNA bound by 1 or 2 RuvA tetramers; 4 subunits per hexamer contact DNA at a time. Coordinated motions by a converter formed by DNA-disengaged RuvB subunits stimulates ATP hydrolysis and nucleotide exchange. Immobilization of the converter enables RuvB to convert the ATP-contained energy into a lever motion, pulling 2 nucleotides of DNA out of the RuvA tetramer per ATP hydrolyzed, thus driving DNA branch migration. The RuvB motors rotate together with the DNA substrate, which together with the progressing nucleotide cycle form the mechanistic basis for DNA recombination by continuous HJ branch migration. Branch migration allows RuvC to scan DNA until it finds its consensus sequence, where it cleaves and resolves cruciform DNA. This Acaryochloris marina (strain MBIC 11017) protein is Holliday junction branch migration complex subunit RuvB.